The chain runs to 85 residues: YcgL domain-containing protein ECA2367 (85 aa).

The 85-residue stretch at 1–85 folds into the YcgL domain; sequence MFCVIYRSVK…PVESLLTTPV (85 aa).

The protein is YcgL domain-containing protein ECA2367 of Pectobacterium atrosepticum (strain SCRI 1043 / ATCC BAA-672) (Erwinia carotovora subsp. atroseptica).